We begin with the raw amino-acid sequence, 1665 residues long: Cortactin-binding protein 2 (1665 aa).

Disordered regions lie at residues 1-23 (MATD…AGAT), 201-235 (EEKK…SEFD), 360-441 (ASHG…LHPG), 455-480 (GNAN…PTSR), and 499-617 (RFTS…PKPS). The stretch at 120 to 276 (KMQERMSTQL…EQLKRGNDNK (157 aa)) forms a coiled coil. Polar residues predominate over residues 385–395 (GPSTGSTADLT). Asymmetric dimethylarginine is present on Arg-499. The span at 584–594 (TVASPPSSLPQ) shows a compositional bias: polar residues. 6 ANK repeats span residues 710–740 (GRPT…DINY), 744–773 (DGHS…QVDA), 777–806 (NGFT…NINH), 810–839 (GGQT…DRSI), 843–872 (DGWT…PAHG), and 914–944 (EGWT…EPER). Positions 1447 to 1484 (CSKKKGESGAWRKVSTSPRKKSSRFSSPTWNKPDLSEE) are disordered. Position 1526 is a phosphoserine (Ser-1526). Positions 1544–1562 (SESDISKIADSRDDLRRFD) are enriched in basic and acidic residues. The segment at 1544 to 1648 (SESDISKIAD…RQIEINNNSK (105 aa)) is disordered. 2 stretches are compositionally biased toward polar residues: residues 1564–1576 (PGNN…TVNN) and 1584–1604 (KEVS…QSKT). Low complexity predominate over residues 1626–1640 (SQNTKRSSSSSNTRQ).

As to quaternary structure, interacts with CTTN/cortactin SH3 domain. Interacts with STRN, STRN4/zinedin and MOB4/phocein; this interactions mediate the association with the STRIPAK core complex and may regulate dendritic spine distribution of the STRIPAK complex in hippocampal neurons. Activation of glutamate receptors weakens the interaction with STRN and STRN4.

It localises to the cytoplasm. The protein localises to the cell cortex. It is found in the cell projection. The protein resides in the dendritic spine. Functionally, regulates the dendritic spine distribution of CTTN/cortactin in hippocampal neurons, and thus controls dendritic spinogenesis and dendritic spine maintenance. Associates with the striatin-interacting phosphatase and kinase (STRIPAK) core complex to regulate dendritic spine distribution of the STRIPAK complex in hippocampal neurons. In Equus caballus (Horse), this protein is Cortactin-binding protein 2 (CTTNBP2).